We begin with the raw amino-acid sequence, 338 residues long: Mycothiol acetyltransferase (338 aa).

2 consecutive N-acetyltransferase domains span residues 29-173 (PETY…HQLP) and 181-338 (ISLR…NKFQ). Asp55 is a binding site for 1D-myo-inositol 2-(L-cysteinylamino)-2-deoxy-alpha-D-glucopyranoside. 105 to 107 (LVV) lines the acetyl-CoA pocket. Residues Glu208, Lys248, and Glu261 each coordinate 1D-myo-inositol 2-(L-cysteinylamino)-2-deoxy-alpha-D-glucopyranoside. Residues 265 to 267 (VGI) and 272 to 278 (QGKGLGK) contribute to the acetyl-CoA site. Residue Tyr299 participates in 1D-myo-inositol 2-(L-cysteinylamino)-2-deoxy-alpha-D-glucopyranoside binding.

Belongs to the acetyltransferase family. MshD subfamily. Monomer.

The catalysed reaction is 1D-myo-inositol 2-(L-cysteinylamino)-2-deoxy-alpha-D-glucopyranoside + acetyl-CoA = mycothiol + CoA + H(+). Catalyzes the transfer of acetyl from acetyl-CoA to desacetylmycothiol (Cys-GlcN-Ins) to form mycothiol. In Renibacterium salmoninarum (strain ATCC 33209 / DSM 20767 / JCM 11484 / NBRC 15589 / NCIMB 2235), this protein is Mycothiol acetyltransferase.